Reading from the N-terminus, the 152-residue chain is Ribosome maturation factor RimP (152 aa).

It belongs to the RimP family.

It is found in the cytoplasm. Its function is as follows. Required for maturation of 30S ribosomal subunits. This is Ribosome maturation factor RimP from Sodalis glossinidius (strain morsitans).